We begin with the raw amino-acid sequence, 686 residues long: Kinesin light chain (686 aa).

2 disordered regions span residues 1–23 (MSGS…SQEQ) and 158–204 (KYDE…SVSA). Residues 20-160 (SQEQIITGTR…EYMNSIKKYD (141 aa)) adopt a coiled-coil conformation. TPR repeat units follow at residues 215–248 (LRTL…LEKT), 257–290 (ATML…REKT), 299–332 (AATL…REKV), 341–374 (AKQL…YEKK), 383–416 (AKTK…AHER), and 472–505 (TTTL…RRNA). 2 disordered regions span residues 520–558 (QDLS…YEKT) and 586–686 (GYVE…SGNF). Polar residues predominate over residues 675-686 (DNLSSRRQSGNF).

The protein belongs to the kinesin light chain family. In terms of assembly, oligomeric complex composed of two heavy chains and two light chains. Phosphorylation may modulate the process of mechanochemical coupling.

Its subcellular location is the cytoplasm. It is found in the cytoskeleton. Kinesin is a microtubule-associated force-producing protein that may play a role in organelle transport. The light chain may function in coupling of cargo to the heavy chain or in the modulation of its ATPase activity. This Strongylocentrotus purpuratus (Purple sea urchin) protein is Kinesin light chain.